The sequence spans 489 residues: Ammonium transporter MEP3 (489 aa).

Residues 1-17 (MARGDGHLWTETYDSST) lie on the Extracellular side of the membrane. Residues 18–38 (VAFMILGAALVFFMVPGLGFL) form a helical membrane-spanning segment. Topologically, residues 39-48 (YSGLARRKSA) are cytoplasmic. Residues 49-69 (LALIWVVIMATLVGILQWYFW) form a helical membrane-spanning segment. Topologically, residues 70 to 108 (GYSLAFSKTATNNKFIGNLDSFGFRNVYGKISDDSTYPE) are extracellular. Residues 109 to 129 (LIYAIFQMMFMCVALSIIAGA) form a helical membrane-spanning segment. The Cytoplasmic portion of the chain corresponds to 130 to 139 (TAERGKLFPH). A helical membrane pass occupies residues 140-160 (MVFLFVFATLVYCPITYWIWA). Topologically, residues 161 to 173 (PGGWAYQWGVLDW) are extracellular. Residues 174–194 (AGGGNIEILSAVAGFVYSYFL) traverse the membrane as a helical segment. Topologically, residues 195-209 (GRRKENLLINFRPHN) are cytoplasmic. The chain crosses the membrane as a helical span at residues 210–230 (VSMVTLGTSILWFGWLLFNAA). The Extracellular portion of the chain corresponds to 231–239 (SSLSPNMRS). A helical transmembrane segment spans residues 240–260 (VYAFMNTCLSATTGGMTWCLL). Residues 261 to 267 (DYRSEKK) are Cytoplasmic-facing. The helical transmembrane segment at 268–288 (WSTVGLCSGIICGLVAATPSS) threads the bilayer. Residue glycine 289 is a topological domain, extracellular. A helical membrane pass occupies residues 290–310 (CITLYGSLIQGIIAGVVCNFA). The Cytoplasmic portion of the chain corresponds to 311 to 330 (TKIKYYLKVDDSLDLLAEHG). The helical transmembrane segment at 331-351 (IAGVVGLIFNALFAADWVIGM) threads the bilayer. The Extracellular segment spans residues 352-372 (DGTTKHKGGWLTHNWKQMYIQ). A helical membrane pass occupies residues 373-393 (IAYIGASAGYCAVVTAIICFV). At 394–489 (LGKIPGVHLR…NPKLHHAKEA (96 aa)) the chain is on the cytoplasmic side. A compositionally biased stretch (polar residues) spans 448 to 481 (GANSASETNPTEDSQNSSLSSATVSGQNEKSNNP). The interval 448 to 489 (GANSASETNPTEDSQNSSLSSATVSGQNEKSNNPKLHHAKEA) is disordered.

This sequence belongs to the ammonia transporter channel (TC 1.A.11.2) family.

It is found in the membrane. Functionally, transporter for ammonium (both charged and uncharged NH3 and NH4) to use as a nitrogen source. The affinity of MEP2 is about twenty times higher than that of MEP1. MEP3 has the lowest affinity. The chain is Ammonium transporter MEP3 (MEP3) from Saccharomyces cerevisiae (strain ATCC 204508 / S288c) (Baker's yeast).